The sequence spans 314 residues: Probable cell division protein WhiA (314 aa).

Positions 274–308 form a DNA-binding region, H-T-H motif; it reads SLKELGEMVSTGPISKSGVNHRLRKLNDLADKIRN.

Belongs to the WhiA family.

Functionally, involved in cell division and chromosome segregation. The chain is Probable cell division protein WhiA from Staphylococcus aureus (strain USA300).